We begin with the raw amino-acid sequence, 284 residues long: Acetylglutamate kinase (284 aa).

Substrate is bound by residues 64 to 65, R86, and N177; that span reads GG.

The protein belongs to the acetylglutamate kinase family. ArgB subfamily.

The protein localises to the cytoplasm. It carries out the reaction N-acetyl-L-glutamate + ATP = N-acetyl-L-glutamyl 5-phosphate + ADP. It participates in amino-acid biosynthesis; L-arginine biosynthesis; N(2)-acetyl-L-ornithine from L-glutamate: step 2/4. Catalyzes the ATP-dependent phosphorylation of N-acetyl-L-glutamate. In Haemophilus ducreyi (strain 35000HP / ATCC 700724), this protein is Acetylglutamate kinase.